The primary structure comprises 429 residues: Uterine milk protein (429 aa).

Residues 1–25 form the signal peptide; it reads MSHRRMQLALSLVFILCGLFNSIFC. 2 N-linked (GlcNAc...) asparagine glycosylation sites follow: Asn222 and Asn268.

It belongs to the serpin family. UTMP subfamily. Glycosylated; carries the so-called mannose 6-phosphate lysosomal recognition marker on its carbohydrate chains. In terms of tissue distribution, secreted by ovine endometrium under the influence of progesterone.

The sequence is that of Uterine milk protein from Ovis aries (Sheep).